We begin with the raw amino-acid sequence, 239 residues long: tRNA (guanine-N(7)-)-methyltransferase (239 aa).

Residues glutamate 69, glutamate 94, aspartate 121, and aspartate 144 each contribute to the S-adenosyl-L-methionine site. Residue aspartate 144 is part of the active site. Residue lysine 148 participates in substrate binding. The interval 150–155 (RHNKRR) is interaction with RNA. Residues aspartate 180 and 217–220 (TKFE) each bind substrate.

It belongs to the class I-like SAM-binding methyltransferase superfamily. TrmB family. Monomer.

The catalysed reaction is guanosine(46) in tRNA + S-adenosyl-L-methionine = N(7)-methylguanosine(46) in tRNA + S-adenosyl-L-homocysteine. The protein operates within tRNA modification; N(7)-methylguanine-tRNA biosynthesis. In terms of biological role, catalyzes the formation of N(7)-methylguanine at position 46 (m7G46) in tRNA. The sequence is that of tRNA (guanine-N(7)-)-methyltransferase from Salmonella typhi.